Here is a 258-residue protein sequence, read N- to C-terminus: Capsid protein (258 aa).

The Bipartite nuclear localization signal motif lies at 3–20 (KRPGDIIISTPGSKVRRR). Residues 41–55 (RKRAWVNRPMYRKPT) carry the Nuclear localization signal motif. The segment at 69–86 (CEGPCKVQSFEQRDDVKH) is a zinc-finger region. The Nuclear export signal signature appears at 102–123 (LTHRVGKRFCIKSIYILGKIWL). The Bipartite nuclear localization signal motif lies at 202 to 249 (KRFYRLNHHVTYNHQEAGKYENHTENALLLYMACTHASNPVYATLKIR).

It belongs to the geminiviridae capsid protein family. Homomultimer. Binds to single-stranded and double-stranded viral DNA. Interacts (via nuclear localization signals) with host importin alpha-1a.

The protein resides in the virion. Its subcellular location is the host nucleus. Its function is as follows. Encapsidates the viral DNA into characteristic twinned ('geminate') particles. Binds the genomic viral ssDNA and shuttles it into and out of the cell nucleus. The CP of bipartite geminiviruses is not required for cell-to-cell or systemic movement. This African cassava mosaic virus (isolate West Kenyan 844) (ACMV) protein is Capsid protein.